The sequence spans 147 residues: 3-hydroxyacyl-[acyl-carrier-protein] dehydratase FabZ (147 aa).

The active site involves H51.

The protein belongs to the thioester dehydratase family. FabZ subfamily.

It is found in the cytoplasm. The enzyme catalyses a (3R)-hydroxyacyl-[ACP] = a (2E)-enoyl-[ACP] + H2O. Involved in unsaturated fatty acids biosynthesis. Catalyzes the dehydration of short chain beta-hydroxyacyl-ACPs and long chain saturated and unsaturated beta-hydroxyacyl-ACPs. This is 3-hydroxyacyl-[acyl-carrier-protein] dehydratase FabZ from Anaplasma marginale (strain Florida).